The chain runs to 250 residues: Hydroxyethylthiazole kinase (250 aa).

M39 lines the substrate pocket. ATP contacts are provided by R114 and T159. G186 is a substrate binding site.

It belongs to the Thz kinase family. Requires Mg(2+) as cofactor.

The enzyme catalyses 5-(2-hydroxyethyl)-4-methylthiazole + ATP = 4-methyl-5-(2-phosphooxyethyl)-thiazole + ADP + H(+). It functions in the pathway cofactor biosynthesis; thiamine diphosphate biosynthesis; 4-methyl-5-(2-phosphoethyl)-thiazole from 5-(2-hydroxyethyl)-4-methylthiazole: step 1/1. Functionally, catalyzes the phosphorylation of the hydroxyl group of 4-methyl-5-beta-hydroxyethylthiazole (THZ). The sequence is that of Hydroxyethylthiazole kinase from Lactococcus lactis subsp. cremoris (strain SK11).